The chain runs to 66 residues: Toxin BeM14 (66 aa).

The LCN-type CS-alpha/beta domain maps to 2-66 (RDAYIADDRN…IRKIPGEECR (65 aa)). Cystine bridges form between cysteine 12-cysteine 65, cysteine 16-cysteine 36, cysteine 22-cysteine 46, and cysteine 26-cysteine 48.

The protein belongs to the long (4 C-C) scorpion toxin superfamily. Sodium channel inhibitor family. Alpha subfamily. As to expression, expressed by the venom gland.

It is found in the secreted. Functionally, alpha toxins bind voltage-independently at site-3 of sodium channels (Nav) and inhibit the inactivation of the activated channels, thereby blocking neuronal transmission. Has paralytic activity in mice. The polypeptide is Toxin BeM14 (Mesobuthus eupeus (Lesser Asian scorpion)).